A 517-amino-acid chain; its full sequence is GMP synthase [glutamine-hydrolyzing] (517 aa).

One can recognise a Glutamine amidotransferase type-1 domain in the interval 11–202 (KIIVLDYGSQ…AFGVCGAQDN (192 aa)). Residue Cys-88 is the Nucleophile of the active site. Catalysis depends on residues His-176 and Glu-178. The region spanning 203-392 (WTMNDFIDMQ…LGMPYELVWR (190 aa)) is the GMPS ATP-PPase domain. 230 to 236 (SGGVDSS) serves as a coordination point for ATP.

As to quaternary structure, homodimer.

The enzyme catalyses XMP + L-glutamine + ATP + H2O = GMP + L-glutamate + AMP + diphosphate + 2 H(+). It functions in the pathway purine metabolism; GMP biosynthesis; GMP from XMP (L-Gln route): step 1/1. Catalyzes the synthesis of GMP from XMP. The polypeptide is GMP synthase [glutamine-hydrolyzing] (Latilactobacillus sakei subsp. sakei (strain 23K) (Lactobacillus sakei subsp. sakei)).